The chain runs to 296 residues: MIIHPNFDPVAIHLGPLAVRWYGLMYLVGFIAAIVVGRIRLKLPHVAAQGWTAKDIDDMMFYGVLGTVLGGRLGYVLFYKADFYFSHPLDVFKVWEGGMSFHGGFLGVTLAMMLFAWQRKRHWLQVTDFVAPMVPTGLAAGRLGNFINGELWGRVTDPSAPWAMLFPGAMRDDAAWLPKHPELVEKWHLADVFMQYQMLPRHPSQLYEIALEGIVLFFALFLFARKSRPMGAVSALFLIGYGLARFTVEFAREPDDFLGLLALGLSMGQWLSLPMILAGVALMVWAYRRRAANAAA.

The next 3 helical transmembrane spans lie at 17 to 37 (LAVR…IVVG), 59 to 79 (MMFY…VLFY), and 97 to 117 (GGMS…LFAW). R142 contacts a 1,2-diacyl-sn-glycero-3-phospho-(1'-sn-glycerol). 2 consecutive transmembrane segments (helical) span residues 230-250 (MGAV…TVEF) and 257-277 (FLGL…PMIL).

This sequence belongs to the Lgt family.

It is found in the cell inner membrane. The catalysed reaction is L-cysteinyl-[prolipoprotein] + a 1,2-diacyl-sn-glycero-3-phospho-(1'-sn-glycerol) = an S-1,2-diacyl-sn-glyceryl-L-cysteinyl-[prolipoprotein] + sn-glycerol 1-phosphate + H(+). It functions in the pathway protein modification; lipoprotein biosynthesis (diacylglyceryl transfer). Its function is as follows. Catalyzes the transfer of the diacylglyceryl group from phosphatidylglycerol to the sulfhydryl group of the N-terminal cysteine of a prolipoprotein, the first step in the formation of mature lipoproteins. The chain is Phosphatidylglycerol--prolipoprotein diacylglyceryl transferase from Burkholderia lata (strain ATCC 17760 / DSM 23089 / LMG 22485 / NCIMB 9086 / R18194 / 383).